Consider the following 665-residue polypeptide: BTB/POZ domain-containing protein At1g30440 (665 aa).

Residues 28–98 (SDIVVEVGEM…CYGVKLELTA (71 aa)) enclose the BTB domain. One can recognise an NPH3 domain in the interval 214 to 508 (DWWYEDASML…VQVLFFEQLQ (295 aa)). Positions 260 to 280 (LKRRRGGPESSGRFSTPLGSG) are disordered. A compositionally biased stretch (polar residues) spans 271–280 (GRFSTPLGSG). Phosphoserine is present on Ser-279. A coiled-coil region spans residues 281–306 (NVLSEEEQKNLLEEIQELLRMQKGLV). Residue Tyr-449 is modified to Phosphotyrosine. Residues 626-639 (SAQEGSVSKSNNEN) are compositionally biased toward polar residues. Residues 626 to 665 (SAQEGSVSKSNNENVKIEKLKDVKERRGKHKKASSISSER) are disordered. Positions 640-650 (VKIEKLKDVKE) are enriched in basic and acidic residues.

The protein belongs to the NPH3 family.

It participates in protein modification; protein ubiquitination. Functionally, may act as a substrate-specific adapter of an E3 ubiquitin-protein ligase complex (CUL3-RBX1-BTB) which mediates the ubiquitination and subsequent proteasomal degradation of target proteins. The polypeptide is BTB/POZ domain-containing protein At1g30440 (Arabidopsis thaliana (Mouse-ear cress)).